We begin with the raw amino-acid sequence, 473 residues long: Photosystem II CP43 reaction center protein (473 aa).

Positions 1–14 are excised as a propeptide; the sequence is MKTLYSLRRFYPVE. N-acetylthreonine is present on threonine 15. Threonine 15 carries the phosphothreonine modification. 5 helical membrane passes run 69–93, 134–155, 178–200, 255–275, and 291–312; these read LFEV…PHLA, LLGP…KDRN, KALY…RKIT, KPFA…LSYS, and WFNN…ASQA. Position 367 (glutamate 367) interacts with [CaMn4O5] cluster. A helical membrane pass occupies residues 447–471; the sequence is RARAAAAGFEKGIDRDFEPVLSMTP.

This sequence belongs to the PsbB/PsbC family. PsbC subfamily. PSII is composed of 1 copy each of membrane proteins PsbA, PsbB, PsbC, PsbD, PsbE, PsbF, PsbH, PsbI, PsbJ, PsbK, PsbL, PsbM, PsbT, PsbX, PsbY, PsbZ, Psb30/Ycf12, at least 3 peripheral proteins of the oxygen-evolving complex and a large number of cofactors. It forms dimeric complexes. It depends on Binds multiple chlorophylls and provides some of the ligands for the Ca-4Mn-5O cluster of the oxygen-evolving complex. It may also provide a ligand for a Cl- that is required for oxygen evolution. PSII binds additional chlorophylls, carotenoids and specific lipids. as a cofactor.

It is found in the plastid. Its subcellular location is the chloroplast thylakoid membrane. Its function is as follows. One of the components of the core complex of photosystem II (PSII). It binds chlorophyll and helps catalyze the primary light-induced photochemical processes of PSII. PSII is a light-driven water:plastoquinone oxidoreductase, using light energy to abstract electrons from H(2)O, generating O(2) and a proton gradient subsequently used for ATP formation. The protein is Photosystem II CP43 reaction center protein of Morus indica (Mulberry).